The following is a 337-amino-acid chain: Glyceraldehyde-3-phosphate dehydrogenase (337 aa).

NAD(+) contacts are provided by residues 17-18 (RI), Asp-39, Lys-83, and Ser-125. Residues 156–158 (SCT), Thr-187, Arg-202, 215–216 (TG), and Arg-238 each bind D-glyceraldehyde 3-phosphate. Cys-157 (nucleophile) is an active-site residue. Asn-319 contacts NAD(+).

Belongs to the glyceraldehyde-3-phosphate dehydrogenase family. In terms of assembly, homotetramer.

Its subcellular location is the cytoplasm. The catalysed reaction is D-glyceraldehyde 3-phosphate + phosphate + NAD(+) = (2R)-3-phospho-glyceroyl phosphate + NADH + H(+). The protein operates within carbohydrate degradation; glycolysis; pyruvate from D-glyceraldehyde 3-phosphate: step 1/5. In terms of biological role, catalyzes the oxidative phosphorylation of glyceraldehyde 3-phosphate (G3P) to 1,3-bisphosphoglycerate (BPG) using the cofactor NAD. The first reaction step involves the formation of a hemiacetal intermediate between G3P and a cysteine residue, and this hemiacetal intermediate is then oxidized to a thioester, with concomitant reduction of NAD to NADH. The reduced NADH is then exchanged with the second NAD, and the thioester is attacked by a nucleophilic inorganic phosphate to produce BPG. This chain is Glyceraldehyde-3-phosphate dehydrogenase (gapA), found in Mycoplasma pneumoniae (strain ATCC 29342 / M129 / Subtype 1) (Mycoplasmoides pneumoniae).